The chain runs to 297 residues: uncharacterized protein (297 aa).

7 WD repeats span residues 12–51 (KAKE…CIHE), 54–93 (GHGH…VDRR), 96–135 (GHLA…FSPI), 140–177 (DAKD…LSSD), 179–217 (FSHP…ILKS), 222–261 (KNME…QITS), and 265–297 (VGTP…YQYN).

The protein belongs to the WD repeat MORG1 family.

Its subcellular location is the cytoplasm. The protein resides in the nucleus. This is an uncharacterized protein from Schizosaccharomyces pombe (strain 972 / ATCC 24843) (Fission yeast).